Here is a 168-residue protein sequence, read N- to C-terminus: uncharacterized protein (168 aa).

Disordered regions lie at residues 1–81 (MSSA…GRSW) and 119–150 (RDLS…STVA). The segment covering 7-34 (SRTSRSKATGASSSSISSSIRASPSSSS) has biased composition (low complexity). Residues 43–67 (TRRRRRRTGRRSTKRSIISPRRRRM) show a composition bias toward basic residues. The span at 123-146 (ESASTGSENLSRKASNQSQSQGRL) shows a compositional bias: polar residues.

This is an uncharacterized protein from Human adenovirus C serotype 2 (HAdV-2).